Reading from the N-terminus, the 174-residue chain is Gamma-crystallin C (174 aa).

Beta/gamma crystallin 'Greek key' domains lie at 2 to 40 (GKIT…RVES) and 41 to 83 (GCWM…CLIP). At Cys-23 the chain carries S-methylcysteine. The segment at 84–87 (QTGS) is connecting peptide. Beta/gamma crystallin 'Greek key' domains follow at residues 88–128 (HRLR…HVLE) and 129–171 (GCWV…RRVV).

It belongs to the beta/gamma-crystallin family. In terms of assembly, monomer.

Functionally, crystallins are the dominant structural components of the vertebrate eye lens. This chain is Gamma-crystallin C (CRYGC), found in Macaca mulatta (Rhesus macaque).